A 390-amino-acid polypeptide reads, in one-letter code: Levoglucosan dehydrogenase (390 aa).

Residues F13, M14, E43, T81, N83, H86, E103, K104, A130, and N132 each contribute to the NADH site. K104 lines the levoglucosan pocket. Levoglucosan-binding residues include Y133 and Q163. 2 residues coordinate NADH: W175 and R176. The levoglucosan site is built by R176, D189, and H193. Y335 contributes to the NADH binding site.

The protein belongs to the Gfo/Idh/MocA family. In terms of assembly, homotetramer.

It catalyses the reaction levoglucosan + NAD(+) = 3-dehydrolevoglucosan + NADH + H(+). Catalyzes the oxidation of levoglucosan (1,6-anhydro-beta-D-glucose, LG) to 3-dehydrolevoglucosan (3-keto-LG). Exhibits high substrate specificity toward levoglucosan and NAD(+) for the oxidative reaction. Exhibits weak activities (about 4% compared with that of LG) toward L-sorbose and 1,5-anhydro-D-glucitol, and activity toward D-xylose is also detectable (1.7%). Can also efficiently catalyzes the NADH-dependent reduction (reverse reaction) of 3-keto-LG. This is Levoglucosan dehydrogenase from Pseudarthrobacter phenanthrenivorans (strain DSM 18606 / JCM 16027 / LMG 23796 / Sphe3) (Arthrobacter phenanthrenivorans).